The following is a 446-amino-acid chain: UDP-N-acetylmuramoylalanine--D-glutamate ligase (446 aa).

115-121 (GSNGKST) is an ATP binding site.

It belongs to the MurCDEF family.

Its subcellular location is the cytoplasm. It carries out the reaction UDP-N-acetyl-alpha-D-muramoyl-L-alanine + D-glutamate + ATP = UDP-N-acetyl-alpha-D-muramoyl-L-alanyl-D-glutamate + ADP + phosphate + H(+). It participates in cell wall biogenesis; peptidoglycan biosynthesis. In terms of biological role, cell wall formation. Catalyzes the addition of glutamate to the nucleotide precursor UDP-N-acetylmuramoyl-L-alanine (UMA). In Hahella chejuensis (strain KCTC 2396), this protein is UDP-N-acetylmuramoylalanine--D-glutamate ligase.